Reading from the N-terminus, the 588-residue chain is Transcription factor 7-like 1 (588 aa).

Gly residues predominate over residues 1–31 (MPQLGGGGGGGGGGSGGGGGSSAGAAGGGDD). The segment at 1–74 (MPQLGGGGGG…VKSSLVNESE (74 aa)) is CTNNB1-binding. Disordered stretches follow at residues 1–101 (MPQL…PRDY), 203–234 (SPGS…SPYY), and 409–506 (LYPT…LSLT). A compositionally biased stretch (low complexity) spans 67–81 (SSLVNESENQSSSSD). Residues 83-101 (EAERRPQPVRDTFQKPRDY) show a composition bias toward basic and acidic residues. The HMG box DNA-binding region spans 346–414 (VKKPLNAFML…LHSQLYPTWS (69 aa)). Positions 421-427 (KKKKRKR) match the Nuclear localization signal motif. Low complexity-rich tracts occupy residues 431 to 441 (LSQTQSQQQVQ) and 478 to 497 (SPAT…ATHS).

Belongs to the TCF/LEF family. Binds the armadillo repeat of CTNNB1 and forms a stable complex. Interacts with DAZAP2. In terms of tissue distribution, detected in hair follicles and skin keratinocytes, and at lower levels in stomach epithelium.

It is found in the nucleus. Functionally, participates in the Wnt signaling pathway. Binds to DNA and acts as a repressor in the absence of CTNNB1, and as an activator in its presence. Necessary for the terminal differentiation of epidermal cells, the formation of keratohyalin granules and the development of the barrier function of the epidermis. Down-regulates NQO1, leading to increased mitomycin c resistance. The polypeptide is Transcription factor 7-like 1 (TCF7L1) (Homo sapiens (Human)).